Consider the following 228-residue polypeptide: Cytidylate kinase (228 aa).

ATP is bound at residue 17-25 (GPSASGKGT).

It belongs to the cytidylate kinase family. Type 1 subfamily.

The protein resides in the cytoplasm. The enzyme catalyses CMP + ATP = CDP + ADP. It carries out the reaction dCMP + ATP = dCDP + ADP. This chain is Cytidylate kinase, found in Paraburkholderia xenovorans (strain LB400).